Here is a 524-residue protein sequence, read N- to C-terminus: Keratin, type II cytoskeletal 71 (524 aa).

The tract at residues 1–130 (MNRQFTCKSG…DPEIQKVRAQ (130 aa)) is head. Residues 131–166 (EREQIKALNNKFASFIDKVRFLEQQNQVLETKWELL) form a coil 1A region. One can recognise an IF rod domain in the interval 131 to 444 (EREQIKALNN…KLLESEECRM (314 aa)). The segment at 167 to 185 (QQLDLNNCKNNLEPILEGY) is linker 1. The coil 1B stretch occupies residues 186-277 (ISNLRKQLET…CLYEAEIAQI (92 aa)). The tract at residues 278–301 (QSHISDMSVILSMDNNRDLNLDSI) is linker 12. Positions 302–440 (IDEVRAQYEE…ATYRKLLESE (139 aa)) are coil 2. The interval 441 to 524 (ECRMSGEFPS…QSASSKKASR (84 aa)) is tail. The disordered stretch occupies residues 491-524 (VRGGEGRSRGSTSDYKDTLGKGSSQSASSKKASR). Residues 494–509 (GEGRSRGSTSDYKDTL) show a composition bias toward basic and acidic residues. Positions 510–524 (GKGSSQSASSKKASR) are enriched in low complexity.

Belongs to the intermediate filament family. Heterodimer of a type I and a type II keratin. Associates with KRT16 and/or KRT17.

Its subcellular location is the cytoplasm. The protein localises to the cytoskeleton. In terms of biological role, plays a central role in hair formation. Essential component of keratin intermediate filaments in the inner root sheath (IRS) of the hair follicle. The protein is Keratin, type II cytoskeletal 71 (KRT71) of Felis catus (Cat).